The chain runs to 204 residues: uncharacterized protein (204 aa).

A helical membrane pass occupies residues 63 to 83 (SLLLSMVASVTAAGGNAAIVG).

The protein resides in the membrane. This is an uncharacterized protein from Mycobacterium tuberculosis (strain ATCC 25618 / H37Rv).